Reading from the N-terminus, the 626-residue chain is Bifurcating [FeFe] hydrogenase beta subunit (626 aa).

198–201 contacts NAD(+); the sequence is GGGG. Residues K207 and 224-228 each bind FMN; that span reads NGDEG. D229 lines the NAD(+) pocket. FMN is bound by residues 312-317 and 350-352; these read FVCGEE and INN. C485, C488, C491, C531, C578, C581, C584, C588, C608, C611, C614, and C618 together coordinate [4Fe-4S] cluster. 4Fe-4S ferredoxin-type domains follow at residues 569–598 and 599–626; these read KKYV…GERG and KPYT…IELV.

The protein belongs to the complex I 51 kDa subunit family. As to quaternary structure, heterotrimer composed of HydA (alpha subunit), HydB (beta subunit) and HydC (gamma subunit). Near neutral and acidic pH conditions favor oligomerization of the heterotrimeric holoenzyme. [2Fe-2S] cluster serves as cofactor. The cofactor is [4Fe-4S] cluster. FMN is required as a cofactor.

It localises to the cytoplasm. It carries out the reaction 2 H2 + 2 oxidized [2Fe-2S]-[ferredoxin] + NAD(+) = 2 reduced [2Fe-2S]-[ferredoxin] + NADH + 3 H(+). Catalyzes the oxidation of the physiological electron carriers NADH and reduced ferredoxin, coupled to the production of H(2). Acts as a bifurcating [FeFe] hydrogenase, which uses the exergonic oxidation of reduced ferredoxin to drive the unfavorable oxidation of NADH to produce H(2). The beta subunit contains flavin- and NAD-binding sites and is potentially the site for NADH oxidation, with the subsequent shuttling of electrons to the alpha subunit. The sequence is that of Bifurcating [FeFe] hydrogenase beta subunit from Thermotoga maritima (strain ATCC 43589 / DSM 3109 / JCM 10099 / NBRC 100826 / MSB8).